The following is a 417-amino-acid chain: MDIVVLGGGVVGVTSAWYLAKAGHKVTLLERRDGVALETSHANAGQISPGYAAPWAAPGIPLKAAKWLLQKHAPFTVRPTSDPFQLRWMLKMFANCTPAAYAVNKGRMVRLAEYSRDCMKLLRDELSIDYEGRQLGTLQLFRSQAQLDASKRDIEVLEEYGVPYQSLDAAGCEGAEPALARVRGKIVGGLRLPGDETGDCFRFTKAMAAEAQRLGVKFVFNCAIDEIELAQGRAVAVRAGEQRFKADAIVCALGSYATGFLRPLGLDLPVYPVKGYSLTLPMINAEASPRSTVLDETYKVAITRFDERIRVGGMAELSGYNLALNPKRHDTLAMVVGDLFPEGGDISRADFWTGLRPMTPDGTPLVGPSPIPGLWLNTGHGTLGWTMAAGSGQLLCDLISGSDTAISDEGLTLARYG.

3-17 serves as a coordination point for FAD; the sequence is IVVLGGGVVGVTSAW.

Belongs to the DadA oxidoreductase family. The cofactor is FAD.

It carries out the reaction a D-alpha-amino acid + A + H2O = a 2-oxocarboxylate + AH2 + NH4(+). It participates in amino-acid degradation; D-alanine degradation; NH(3) and pyruvate from D-alanine: step 1/1. Functionally, oxidative deamination of D-amino acids. The polypeptide is D-amino acid dehydrogenase (Aeromonas hydrophila subsp. hydrophila (strain ATCC 7966 / DSM 30187 / BCRC 13018 / CCUG 14551 / JCM 1027 / KCTC 2358 / NCIMB 9240 / NCTC 8049)).